The sequence spans 3132 residues: Toxin CdiA (3132 aa).

The signal signal peptide spans 1–32 (MHQPPVRFTYRLLSYLVSAIIAGQPLLPAVGA). Positions 36–322 (PQNGAGMDKA…AGGNLSVTGT (287 aa)) are two-partner system transport domain (TPS). The interval 351 to 1378 (GELTAGQNAM…ITMNTAHLLN (1028 aa)) is FHA-1. Positions 1379–1635 (SWDAISASHE…LSLSGASVSS (257 aa)) are receptor-binding domain (RBD). The interval 1636-1820 (YPLPSGNNGY…LSPEDITLHN (185 aa)) is YP domain. Residues 1821 to 1859 (GSVISGNNVQLAGGNITNSGSSINAQNDLLLDRTGSIDN) form a periplasmic FHA-1 repeat (pFR) region. The FHA-2 stretch occupies residues 1930 to 2526 (RATDSLFMGA…QDSDRYDSRQ (597 aa)). Disordered regions lie at residues 2195–2228 (TGTGGIGFTTGSSKTTHDRREAGTTQSQSASTIG) and 2456–2497 (AGIN…SGAQ). Polar residues-rich tracts occupy residues 2217–2228 (GTTQSQSASTIG) and 2483–2497 (VSLTSGRDTTLSGAQ). The interval 2862 to 2904 (DNLSEQERQQISMLATIASGIAGGLVGNSTSAAGTGAQAGRNS) is pre-toxin (PT) domain. Residues 2905-2908 (VENN) carry the VENN CT cleavage motif motif. The interval 2909–3121 (AMSGLEGFGT…IGTVTDYQIE (213 aa)) is C-terminal effector domain (CT).

This sequence in the N-terminal section; belongs to the CdiA toxin family. As to quaternary structure, probably interacts with cognate immunity protein CdiI. In terms of processing, expressed as 303 kDa protein which can be processed to 284 kDa and 195 kDa forms.

The protein resides in the secreted. It localises to the target cell. The protein localises to the target cell cytoplasm. In terms of biological role, toxic component of a toxin-immunity protein module, which functions as a cellular contact-dependent growth inhibition (CDI) system. CDI modules allow bacteria to communicate with and inhibit the growth of closely related neighboring bacteria (target cell counts decrease 1000- to 10(5)-fold) in a contact-dependent fashion. Inhibitory cells must be in logarithmic (not stationary) phase to inhibit growth of their targets, but protein synthesis is not necessary. The presence of P or S but not type 1 pili protects the target cells against growth inhibition for this CDI. BamA on the outer membrane of target cells acts as a receptor for CdiA, while target cell multidrug efflux pump AcrB facilitates its transport into the cytoplasm. Outer membrane receptor function is dependent on extracellular loops of BamA. Cells undergoing CDI show a 2- to 5-fold reversible decrease in aerobic respiration, proton motive force and steady-state ATP levels, suggesting this CT module is an ionophore that disrupts the target cell's inner cell membrane. Growth recovery requires an energy source. Cells expressing this protein in the absence of CdiI initially form filaments, some of which contain multiple nucleoids, while others are devoid of nucleoids. CDI cells induce the phage shock response, but pspA is not required for recovery from CDI. CDI is neutralized by its cognate immunity protein CdiI, but not by non-cognate CdiI from other bacteria with different CDI systems. Plays a role in biofilm formation, a region N-terminal to residue 644 is implicated in this receptor-independent cell adhesion. The CdiA protein is thought to be exported from the cell through the central lumen of CdiB, the other half of its two-partner system (TPS). The TPS domain probably remains associated with CdiB while the FHA-1 domain forms an extended filament (33 nm long) with the receptor-binding domain (RBD) at its extremity; in the secretion arrested state the C-terminus of the RBD and YP domains form a hairpin-like structure as the FHA-2, PT and CT domains are periplasmic. The YP domain is probably responsible for this arrest at the point where it re-enters the host cell periplasm. Upon binding to a target cell outer membrane receptor (BamA for this CDI) a signal is transmitted to activate secretion. The filament becomes about 5 nm longer, the rest of CdiA is secreted and the FHA-2 domain becomes stably associated with the target cell's outer membrane where it facilitates entry of the toxic CT domain into the target cell periplasm. From there the toxic CT domain is cleaved and gains access to the target cell cytoplasm via an inner membrane protein (multidrug efflux pump AcrB for this CDI). The sequence is that of Toxin CdiA from Escherichia coli.